Reading from the N-terminus, the 1812-residue chain is MAVDSAMELLFLDTFKHPSAEQSSHIDVVRFPCVVYINEVRVIPPGVRAHSSLPDNRAYGETSPHTFQLDLFFNNVSKPSAPVFDRLGSLEYDENTSIIFRPNSKVNTDGLVLRGWYNCLTLAIYGSVDRVISHDRDSPPPPPPPPPPPQPQPSLKRNPKHADGEKEDQFNGSPPRPQPRGPRTPPGPPPPDDDEDDPVPLPVSGDKEEDAPHREDYFEPISPDRNSVPQEGQYSDEGEVEEEQQEEGEEDEDDVDVEEEEDEDEDDRRTVDSIPEEEEEDEEEEGEEDEEGEGDDGYEQISSDEDGIADLERETFKYPNFDVEYTAEDLASVPPMTYDPYDRELVPLLYFSCPYKTTFEIEISRMKDQGPDKENSGAIEASVKLTELLDLYREDRGAKWVTALEEIPSLIIKGLSYLQLKNTKQDSLGQLVDWTMQALNLQVALRQPIALNVRQLKAGTKLVSSLAECGAQGVTGLLQAGVISGLFELLFADHVSSSLKLNAFKALDSVISMTEGMEAFLRGRQNEKSGYQKLLELILLDQTVRVVTAGSAILQKCHFYEVLSEIKRLGDHLAEKTSSLPNHSEPDHDTDAGLERTNPEYENEVEASMDMDLLESSNISEGEIERLINLLEEVFHLMETAPHTMIQQPVKSFPTMARITGPPERDDPYPVLFRYLHSHHFLELVTLLLSIPVTSAHPGVLQATKDVLKFLAQSQKGLLFFMSEYEATNLLIRALCHFYDQDEEEGLQSDGVIDDAFALWLQDSTQTLQCITELFSHFQRCTASEETDHSDLLGTLHNLYLITFNPVGRSAVGHVFSLEKNLQSLITLMEYYSKEALGDSKSKKSVAYNYACILILVVVQSSSDVQMLEQHAASLLKLCKADENNAKLQELGKWLEPLKNLRFEINCIPNLIEYVKQNIDNLMTPEGVGLTTALRVLCNVACPPPPVEGQQKDLKWNLAVIQLFSAEGMDTFIRVLQKLNSILTQPWRLHVNMGTTLHRVTTISMARCTLTLLKTMLTELLRGGSFEFKDMRVPSALVTLHMLLCSIPLSGRLDSDEQKIQNDIIDILLTFTQGVNEKLTISEETLANNTWSLMLKEVLSSILKVPEGFFSGLILLSELLPLPLPMQTTQVIEPHDISVALNTRKLWSMHLHVQAKLLQEIVRSFSGTTCQPIQHMLRRICVQLCDLASPTALLIMRTVLDLIVEDLQSTSEDKEKQYTSQTTRLLALLDALASHKACKLAILHLINGTIKGDERYAEIFQDLLALVRSPGDSVIRQQCVEYVTSILQSLCDQDIALILPSSSEGSISELEQLSNSLPNKELMTSICDCLLATLANSESSYNCLLTCVRTMMFLAEHDYGLFHLKSSLRKNSSALHSLLKRVVSTFSKDTGELASSFLEFMRQILNSDTIGCCGDDNGLMEVEGAHTSRTMSINAAELKQLLQSKEESPENLFLELEKLVLEHSKDDDNLDSLLDSVVGLKQMLESSGDPLPLSDQDVEPVLSAPESLQNLFNNRTAYVLADVMDDQLKSMWFTPFQAEEIDTDLDLVKVDLIELSEKCCSDFDLHSELERSFLSEPSSPGRTKTTKGFKLGKHKHETFITSSGKSEYIEPAKRAHVVPPPRGRGRGGFGQGIRPHDIFRQRKQNTSRPPSMHVDDFVAAESKEVVPQDGIPPPKRPLKVSQKISSRGGFSGNRGGRGAFHSQNRFFTPPASKGNYSRREGTRGSSWSAQNTPRGNYNESRGGQSNFNRGPLPPLRPLSSTGYRPSPRDRASRGRGGLGPSWASANSGSGGSRGKFVSGGSGRGRHVRSFTR.

The residue at position 2 (Ala2) is an N-acetylalanine. Disordered regions lie at residues 132 to 302 (ISHD…EQIS) and 576 to 596 (KTSS…GLER). 2 positions are modified to phosphoserine: Ser133 and Ser138. Positions 139–152 (PPPPPPPPPPPQPQ) are enriched in pro residues. A compositionally biased stretch (basic and acidic residues) spans 160–169 (KHADGEKEDQ). Ser173 bears the Phosphoserine mark. Residues 174-190 (PPRPQPRGPRTPPGPPP) are compositionally biased toward pro residues. Thr184 bears the Phosphothreonine mark. Ser222 is modified (phosphoserine). Residues 224 to 233 (DRNSVPQEGQ) are compositionally biased toward polar residues. 2 stretches are compositionally biased toward acidic residues: residues 234–266 (YSDE…EDED) and 274–302 (IPEE…EQIS). Over residues 584–596 (SEPDHDTDAGLER) the composition is skewed to basic and acidic residues. Tyr914 bears the Phosphotyrosine mark. Ser1579 is subject to Phosphoserine. Disordered stretches follow at residues 1616–1635 (HVVP…GIRP) and 1663–1812 (KEVV…SFTR). Gly residues predominate over residues 1689–1698 (GFSGNRGGRG). Thr1708 is subject to Phosphothreonine. At Arg1723 the chain carries Omega-N-methylarginine. The span at 1723 to 1748 (RGSSWSAQNTPRGNYNESRGGQSNFN) shows a compositional bias: polar residues. Arg1741 is subject to Asymmetric dimethylarginine; alternate. Omega-N-methylarginine; alternate is present on Arg1741. Residues Arg1773, Arg1775, and Arg1793 each carry the asymmetric dimethylarginine modification. Gly residues predominate over residues 1788–1802 (GSGGSRGKFVSGGSG). Residues 1803 to 1812 (RGRHVRSFTR) are compositionally biased toward basic residues.

Belongs to the vir family. In terms of assembly, component of the WMM complex, a N6-methyltransferase complex composed of a catalytic subcomplex, named MAC, and of an associated subcomplex, named MACOM. The MAC subcomplex is composed of METTL3 and METTL14. The MACOM subcomplex is composed of WTAP, ZC3H13, CBLL1/HAKAI, VIRMA, and, in some cases of RBM15 (RBM15 or RBM15B). Interacts with WTAP. Also a component of a MACOM-like complex, named WTAP complex, composed of WTAP, ZC3H13, CBLL1, VIRMA, RBM15, BCLAF1 and THRAP3. Interacts with NUDT21 and CPSF6.

It is found in the nucleus speckle. The protein resides in the nucleus. Its subcellular location is the nucleoplasm. The protein localises to the cytoplasm. In terms of biological role, associated component of the WMM complex, a complex that mediates N6-methyladenosine (m6A) methylation of RNAs, a modification that plays a role in the efficiency of mRNA splicing and RNA processing. Acts as a key regulator of m6A methylation by promoting m6A methylation of mRNAs in the 3'-UTR near the stop codon: recruits the catalytic core components METTL3 and METTL14, thereby guiding m6A methylation at specific sites. Required for mRNA polyadenylation via its role in selective m6A methylation: m6A methylation of mRNAs in the 3'-UTR near the stop codon correlating with alternative polyadenylation (APA). The protein is Protein virilizer homolog of Homo sapiens (Human).